The sequence spans 417 residues: Serine hydroxymethyltransferase (417 aa).

(6S)-5,6,7,8-tetrahydrofolate-binding positions include Leu-121 and 125–127; that span reads GHL. An N6-(pyridoxal phosphate)lysine modification is found at Lys-229. 355–357 is a binding site for (6S)-5,6,7,8-tetrahydrofolate; sequence SPF.

It belongs to the SHMT family. As to quaternary structure, homodimer. Pyridoxal 5'-phosphate is required as a cofactor.

It localises to the cytoplasm. It catalyses the reaction (6R)-5,10-methylene-5,6,7,8-tetrahydrofolate + glycine + H2O = (6S)-5,6,7,8-tetrahydrofolate + L-serine. It functions in the pathway one-carbon metabolism; tetrahydrofolate interconversion. It participates in amino-acid biosynthesis; glycine biosynthesis; glycine from L-serine: step 1/1. Catalyzes the reversible interconversion of serine and glycine with tetrahydrofolate (THF) serving as the one-carbon carrier. This reaction serves as the major source of one-carbon groups required for the biosynthesis of purines, thymidylate, methionine, and other important biomolecules. Also exhibits THF-independent aldolase activity toward beta-hydroxyamino acids, producing glycine and aldehydes, via a retro-aldol mechanism. This Serratia proteamaculans (strain 568) protein is Serine hydroxymethyltransferase.